The following is a 191-amino-acid chain: Programmed cell death protein 6 (191 aa).

At alanine 2 the chain carries N-acetylalanine. EF-hand domains follow at residues proline 23–threonine 58, proline 59–tryptophan 89, lysine 90–arginine 125, leucine 126–leucine 161, and threonine 162–valine 191. The Ca(2+) site is built by aspartate 36, aspartate 38, serine 40, valine 42, and glutamate 47. Ca(2+)-binding residues include aspartate 103, aspartate 105, serine 107, methionine 109, and glutamate 114. Aspartate 169, aspartate 171, aspartate 173, and tryptophan 175 together coordinate Mg(2+).

Homodimer and heterodimer; heterodimerizes (via the EF-hand 5) with PEF1. Isoform 1 and isoform 2 self-associate; probably forming homodimers. Interacts with CPNE4 (via VWFA domain). Interacts with PDCD6IP; the interaction is calcium-dependent. Interacts with RBM22. Interacts with PLSCR4. Interacts with ANXA7 and TSG101. Interacts with DAPK1. Interacts with SEC31A; the interaction is calcium-dependent and promotes monoubiquitination of SEC31A. Interacts with ANXA11 (via N-terminus); the interaction is calcium-dependent. Interacts with PLSCR3 (via N-terminus); the interaction is calcium-dependent. Interacts with MCOLN1; the interaction is calcium-dependent. Interacts with KDR; the interaction is calcium-dependent. Interacts with HEBP2; the interaction is calcium-dependent. Interacts with TFG. Isoform 1: Interacts with SHISA5, leading to stabilize it. Isoform 2: Does not interact with SHISA5. Isoform 2: Does not interact with PDCD6IP, TSG101, ANXA7 and ANXA11.

It localises to the endoplasmic reticulum membrane. Its subcellular location is the cytoplasmic vesicle. The protein resides in the COPII-coated vesicle membrane. The protein localises to the cytoplasm. It is found in the nucleus. It localises to the endosome. Its function is as follows. Calcium sensor that plays a key role in processes such as endoplasmic reticulum (ER)-Golgi vesicular transport, endosomal biogenesis or membrane repair. Acts as an adapter that bridges unrelated proteins or stabilizes weak protein-protein complexes in response to calcium: calcium-binding triggers exposure of apolar surface, promoting interaction with different sets of proteins thanks to 3 different hydrophobic pockets, leading to translocation to membranes. Involved in ER-Golgi transport by promoting the association between PDCD6IP and TSG101, thereby bridging together the ESCRT-III and ESCRT-I complexes. Together with PEF1, acts as a calcium-dependent adapter for the BCR(KLHL12) complex, a complex involved in ER-Golgi transport by regulating the size of COPII coats. In response to cytosolic calcium increase, the heterodimer formed with PEF1 interacts with, and bridges together the BCR(KLHL12) complex and SEC31 (SEC31A or SEC31B), promoting monoubiquitination of SEC31 and subsequent collagen export, which is required for neural crest specification. Involved in the regulation of the distribution and function of MCOLN1 in the endosomal pathway. Promotes localization and polymerization of TFG at endoplasmic reticulum exit site. Required for T-cell receptor-, Fas-, and glucocorticoid-induced apoptosis. May mediate Ca(2+)-regulated signals along the death pathway: interaction with DAPK1 can accelerate apoptotic cell death by increasing caspase-3 activity. Its role in apoptosis may however be indirect, as suggested by knockout experiments. May inhibit KDR/VEGFR2-dependent angiogenesis; the function involves inhibition of VEGF-induced phosphorylation of the Akt signaling pathway. Has a lower Ca(2+) affinity than isoform 1. The protein is Programmed cell death protein 6 (Pdcd6) of Mus musculus (Mouse).